The sequence spans 182 residues: CDP-diacylglycerol--glycerol-3-phosphate 3-phosphatidyltransferase (182 aa).

The Cytoplasmic segment spans residues 1 to 12 (MQLNIPTWLTLF). Residues 13-37 (RVVLIPFFVLAFYLPFVWAPMVCAI) form a helical membrane-spanning segment. Residues 38-60 (IFVFAAATDWFDGFLARRWKQTT) are Periplasmic-facing. Residues 61–81 (RFGAFLDPVADKVMVAIALVL) form a helical membrane-spanning segment. Residues 82–86 (VAEHY) are Cytoplasmic-facing. Residues 87 to 107 (HVWWITLPAATMIAREIIISS) traverse the membrane as a helical segment. Over 108-145 (LREWMAEIGKRSSVAVSWIGKVKTTAQMGSLVGLLWRP) the chain is Periplasmic. Residues 146 to 168 (DHNIELASFVLLYIAAVLTFWSM) form a helical membrane-spanning segment. Topologically, residues 169–181 (FQYLNAAWKDLLE) are cytoplasmic.

It belongs to the CDP-alcohol phosphatidyltransferase class-I family.

It localises to the cell inner membrane. The enzyme catalyses a CDP-1,2-diacyl-sn-glycerol + sn-glycerol 3-phosphate = a 1,2-diacyl-sn-glycero-3-phospho-(1'-sn-glycero-3'-phosphate) + CMP + H(+). Its pathway is phospholipid metabolism; phosphatidylglycerol biosynthesis; phosphatidylglycerol from CDP-diacylglycerol: step 1/2. Catalyzes the conversion of cytidine diphosphate diacylglycerol (CDP-DG) and glycerol 3-phosphate into phosphatidylglycerol. Essential for the synthesis of anionic phospholipids, thereby playing a role in balancing the ratio of zwitterionic and anionic phospholipids, which is thought to be important for normal membrane function. This Yersinia enterocolitica serotype O:8 / biotype 1B (strain NCTC 13174 / 8081) protein is CDP-diacylglycerol--glycerol-3-phosphate 3-phosphatidyltransferase.